The following is a 152-amino-acid chain: Large ribosomal subunit protein bL9 (152 aa).

Belongs to the bacterial ribosomal protein bL9 family.

In terms of biological role, binds to the 23S rRNA. This Mycobacterium leprae (strain Br4923) protein is Large ribosomal subunit protein bL9.